Here is a 361-residue protein sequence, read N- to C-terminus: UDP-N-acetylglucosamine--N-acetylmuramyl-(pentapeptide) pyrophosphoryl-undecaprenol N-acetylglucosamine transferase (361 aa).

UDP-N-acetyl-alpha-D-glucosamine contacts are provided by residues T13 to G15, N125, R167, S196, I251, A270 to E275, and Q296.

Belongs to the glycosyltransferase 28 family. MurG subfamily.

It localises to the cell inner membrane. It catalyses the reaction di-trans,octa-cis-undecaprenyl diphospho-N-acetyl-alpha-D-muramoyl-L-alanyl-D-glutamyl-meso-2,6-diaminopimeloyl-D-alanyl-D-alanine + UDP-N-acetyl-alpha-D-glucosamine = di-trans,octa-cis-undecaprenyl diphospho-[N-acetyl-alpha-D-glucosaminyl-(1-&gt;4)]-N-acetyl-alpha-D-muramoyl-L-alanyl-D-glutamyl-meso-2,6-diaminopimeloyl-D-alanyl-D-alanine + UDP + H(+). It functions in the pathway cell wall biogenesis; peptidoglycan biosynthesis. In terms of biological role, cell wall formation. Catalyzes the transfer of a GlcNAc subunit on undecaprenyl-pyrophosphoryl-MurNAc-pentapeptide (lipid intermediate I) to form undecaprenyl-pyrophosphoryl-MurNAc-(pentapeptide)GlcNAc (lipid intermediate II). This chain is UDP-N-acetylglucosamine--N-acetylmuramyl-(pentapeptide) pyrophosphoryl-undecaprenol N-acetylglucosamine transferase, found in Psychrobacter cryohalolentis (strain ATCC BAA-1226 / DSM 17306 / VKM B-2378 / K5).